We begin with the raw amino-acid sequence, 152 residues long: Phosphopantetheine adenylyltransferase (152 aa).

Residue serine 9 participates in substrate binding. Residues 9-10 and histidine 17 contribute to the ATP site; that span reads SF. Residues lysine 41, threonine 73, and arginine 87 each coordinate substrate. ATP-binding positions include 88–90, glutamate 98, and 122–128; these read GLR and TSFISSS.

This sequence belongs to the bacterial CoaD family. In terms of assembly, homohexamer. Requires Mg(2+) as cofactor.

It is found in the cytoplasm. The catalysed reaction is (R)-4'-phosphopantetheine + ATP + H(+) = 3'-dephospho-CoA + diphosphate. Its pathway is cofactor biosynthesis; coenzyme A biosynthesis; CoA from (R)-pantothenate: step 4/5. In terms of biological role, reversibly transfers an adenylyl group from ATP to 4'-phosphopantetheine, yielding dephospho-CoA (dPCoA) and pyrophosphate. This chain is Phosphopantetheine adenylyltransferase, found in Flavobacterium johnsoniae (strain ATCC 17061 / DSM 2064 / JCM 8514 / BCRC 14874 / CCUG 350202 / NBRC 14942 / NCIMB 11054 / UW101) (Cytophaga johnsonae).